The primary structure comprises 982 residues: Protein phosphatase 1 regulatory subunit 12B (982 aa).

Residues 1–24 (MAELEHLGGKRAESARMRRAEQLR) are compositionally biased toward basic and acidic residues. The segment at 1–50 (MAELEHLGGKRAESARMRRAEQLRRWRGSLTEQEPAERRGAGRQPLTRRG) is disordered. Ser29 carries the phosphoserine modification. ANK repeat units lie at residues 57–86 (EDGAVFLAACSSGDTDEVRKLLARGADINT), 90–119 (DGLTALHQACIDENLDMVKFLVENRANVNQ), 123–152 (EGWTPLHAAASCGYLNIAEYFINHGASVGI), 216–245 (SGATALHVAAAKGYSEVLRLLIQAGYELNV), and 249–278 (DGWTPLHAAAHWGVKEACSILAEALCDMDI). Disordered stretches follow at residues 342–517 (EETP…RESA), 556–579 (RTPHKSQADTTAEKTADNVSSSTP), 606–864 (TDSS…EARE), and 918–948 (AQQKQEKTSDRSSVLEMEKRERRALERKMSE). Over residues 362-374 (SEEEEGEDEASES) the composition is skewed to acidic residues. A compositionally biased stretch (basic and acidic residues) spans 375 to 385 (ETEKEADKKPE). The segment covering 389-401 (NHSNSESKSSITE) has biased composition (polar residues). Positions 411–421 (FSASSARRFSS) are enriched in low complexity. Thr445 is subject to Phosphothreonine. The span at 466–478 (SSIYRSSSSPRIS) shows a compositional bias: low complexity. Residues 482 to 491 (DNKDKERENK) are compositionally biased toward basic and acidic residues. A compositionally biased stretch (basic and acidic residues) spans 623–632 (VRDEEAESLR). Positions 633–643 (KARSRQARQTR) are enriched in basic residues. A Phosphothreonine modification is found at Thr646. A compositionally biased stretch (basic and acidic residues) spans 656 to 680 (EAERTFSRSRAERQAQEQPREKPTD). Residues 731 to 742 (TTPASPSTSRPS) show a composition bias toward low complexity. A compositionally biased stretch (polar residues) spans 743–755 (LYTSSHLLWTNRF). A compositionally biased stretch (basic residues) spans 797-807 (ERRRPKERRRG). At Thr808 the chain carries Phosphothreonine. A compositionally biased stretch (basic and acidic residues) spans 824-836 (EEVKETWHERLSR). The residue at position 839 (Ser839) is a Phosphoserine. Positions 840-849 (GGSNPTTSDS) are enriched in polar residues. Basic and acidic residues-rich tracts occupy residues 850–864 (YGDRASARARREARE), 918–927 (AQQKQEKTSD), and 933–948 (EMEKRERRALERKMSE). Ser947 is subject to Phosphoserine.

In terms of assembly, PP1 comprises a catalytic subunit, PPP1CA, PPP1CB or PPP1CC, and one or several targeting or regulatory subunits. PPP1R12B mediates binding to myosin. Isoform 3 and isoform 4 bind PPP1R12A, but not isoform 1 of PPP1R12B itself. Binds IL16. As to expression, detected in skeletal muscle, fetal and adult heart, brain, placenta, kidney, spleen, thymus, pancreas and lung. Isoform 3 and isoform 4 are heart specific.

The protein localises to the cytoplasm. It is found in the cytoskeleton. The protein resides in the stress fiber. Regulates myosin phosphatase activity. Augments Ca(2+) sensitivity of the contractile apparatus. The sequence is that of Protein phosphatase 1 regulatory subunit 12B (PPP1R12B) from Homo sapiens (Human).